The following is a 524-amino-acid chain: Lycopene epsilon cyclase, chloroplastic (524 aa).

The N-terminal 45 residues, 1–45 (MECVGARNFAAMAVSTFPSWSCRRKFPVVKRYSYRNIRFGLCSVR), are a transit peptide targeting the chloroplast. 111–139 (LVVIGCGPAGLALAAESAKLGLKVGLIGP) contacts NAD(+). The next 2 membrane-spanning stretches (helical) occupy residues 441–461 (FFLF…RSFF) and 475–495 (FLGS…MFVI).

The protein belongs to the lycopene cyclase family.

The protein localises to the plastid. It is found in the chloroplast membrane. The enzyme catalyses a carotenoid psi-end group = a carotenoid epsilon-end group. It functions in the pathway carotenoid biosynthesis; alpha-zeacarotene biosynthesis. The protein operates within carotenoid biosynthesis; delta-carotene biosynthesis. In terms of biological role, involved in carotenoid biosynthesis. Catalyzes the single epsilon-cyclization reaction which converts lycopene to delta-carotene and neurosporene to alpha-zeacarotene. Required for lutein biosynthesis. The polypeptide is Lycopene epsilon cyclase, chloroplastic (Arabidopsis thaliana (Mouse-ear cress)).